The following is a 463-amino-acid chain: MSQALSPAKTPKIGFVSLGCPKNLTDSELLLTQLSAEGYETSKTFEGADLVIVNTCGFIDEAVKESLDTIGEALAENGKVIVTGCLGARAGETGGNLVKEVHPSVLAVTGPHAAQEVMEVVHTHCPKPHDPFLDLVPGGFGEAGIKLTPRHYAYLKISEGCNHRCTFCIIPSMRGDLVSRPVGDVLKEAKALFEGGVKELLVISQDTSAYGVDVKYRTGFWDGKPVKTRTLELVQKLGEMAATYGAWVRLHYVYPYPSVDDIIPLMAQGLVLPYLDVPFQHSHPDVLKRMKRPASGEKNLERILRWREACPEIVIRSTFIAGFPGETEEEFQHLLDFVREAQIDRAGCFAYSDVEGAAANELPGMLPMELREERRARFMAVAEEVSTAKLQRRVGQTMQVLVDQAVGLGKKGGVGRSYADAPEIDGVVHLLPPEKFSKTYKVGDFVKARIVGTQGHDLVGVPV.

One can recognise an MTTase N-terminal domain in the interval 11-126; sequence PKIGFVSLGC…VMEVVHTHCP (116 aa). Residues Cys-20, Cys-56, Cys-85, Cys-161, Cys-165, and Cys-168 each coordinate [4Fe-4S] cluster. Residues 147-388 form the Radical SAM core domain; that stretch reads LTPRHYAYLK…MAVAEEVSTA (242 aa). In terms of domain architecture, TRAM spans 391–463; it reads QRRVGQTMQV…QGHDLVGVPV (73 aa).

This sequence belongs to the methylthiotransferase family. RimO subfamily. It depends on [4Fe-4S] cluster as a cofactor.

Its subcellular location is the cytoplasm. It carries out the reaction L-aspartate(89)-[ribosomal protein uS12]-hydrogen + (sulfur carrier)-SH + AH2 + 2 S-adenosyl-L-methionine = 3-methylsulfanyl-L-aspartate(89)-[ribosomal protein uS12]-hydrogen + (sulfur carrier)-H + 5'-deoxyadenosine + L-methionine + A + S-adenosyl-L-homocysteine + 2 H(+). Functionally, catalyzes the methylthiolation of an aspartic acid residue of ribosomal protein uS12. The polypeptide is Ribosomal protein uS12 methylthiotransferase RimO (Acidovorax sp. (strain JS42)).